Here is a 614-residue protein sequence, read N- to C-terminus: Inactive leucine-rich repeat receptor-like serine/threonine-protein kinase At5g24100 (614 aa).

A signal peptide spans 1–21 (MSRGRSFIFYFVLFLFFGSSA). The Extracellular segment spans residues 22–251 (LYSQVTGDLA…KNGIYISEPA (230 aa)). N-linked (GlcNAc...) asparagine glycosylation is present at asparagine 53. 6 LRR repeats span residues 71 to 95 (GTRV…TISR), 96 to 120 (LSEL…FLQL), 121 to 146 (KKLK…TWTN), 148 to 167 (TVLD…GFAN), 168 to 190 (LTGL…DLNL), and 191 to 214 (PGLR…LKRF). 3 N-linked (GlcNAc...) asparagine glycosylation sites follow: asparagine 146, asparagine 158, and asparagine 167. 2 N-linked (GlcNAc...) asparagine glycosylation sites follow: asparagine 197 and asparagine 202. The helical transmembrane segment at 252–272 (ILGIAISVCFVIFFVIAVVII) threads the bilayer. Residues 273-614 (VCYVKRQRKS…VETLEEIERD (342 aa)) are Cytoplasmic-facing. Residues 341-611 (IASAEFLGKG…VKVVETLEEI (271 aa)) form the Protein kinase domain. Serine 343 is modified (phosphoserine). ATP-binding positions include 347–355 (LGKGVFGMT) and lysine 369. Serine 420 is modified (phosphoserine). Phosphothreonine occurs at positions 441, 514, and 591. Residues 578–601 (AKLLQMLQLGTSCTAMVPAKRPDM) form an LRR 7 repeat.

The protein belongs to the protein kinase superfamily. Ser/Thr protein kinase family.

The protein localises to the cell membrane. The protein is Inactive leucine-rich repeat receptor-like serine/threonine-protein kinase At5g24100 of Arabidopsis thaliana (Mouse-ear cress).